We begin with the raw amino-acid sequence, 335 residues long: Phosphate acyltransferase (335 aa).

It belongs to the PlsX family. Homodimer. Probably interacts with PlsY.

It is found in the cytoplasm. It catalyses the reaction a fatty acyl-[ACP] + phosphate = an acyl phosphate + holo-[ACP]. It participates in lipid metabolism; phospholipid metabolism. Catalyzes the reversible formation of acyl-phosphate (acyl-PO(4)) from acyl-[acyl-carrier-protein] (acyl-ACP). This enzyme utilizes acyl-ACP as fatty acyl donor, but not acyl-CoA. This chain is Phosphate acyltransferase, found in Desulfitobacterium hafniense (strain Y51).